Reading from the N-terminus, the 1393-residue chain is DNA-directed RNA polymerase subunit beta'' (1393 aa).

Residues C224, C295, C302, and C305 each contribute to the Zn(2+) site.

The protein belongs to the RNA polymerase beta' chain family. RpoC2 subfamily. In terms of assembly, in plastids the minimal PEP RNA polymerase catalytic core is composed of four subunits: alpha, beta, beta', and beta''. When a (nuclear-encoded) sigma factor is associated with the core the holoenzyme is formed, which can initiate transcription. It depends on Zn(2+) as a cofactor.

The protein localises to the plastid. It localises to the chloroplast. The catalysed reaction is RNA(n) + a ribonucleoside 5'-triphosphate = RNA(n+1) + diphosphate. DNA-dependent RNA polymerase catalyzes the transcription of DNA into RNA using the four ribonucleoside triphosphates as substrates. The polypeptide is DNA-directed RNA polymerase subunit beta'' (Manihot esculenta (Cassava)).